Here is a 144-residue protein sequence, read N- to C-terminus: Putative low molecular weight protein-tyrosine-phosphatase (144 aa).

Cys9 (nucleophile) is an active-site residue. Residue Arg15 is part of the active site. The active-site Proton donor is Asp115.

Belongs to the low molecular weight phosphotyrosine protein phosphatase family.

The catalysed reaction is O-phospho-L-tyrosyl-[protein] + H2O = L-tyrosyl-[protein] + phosphate. The sequence is that of Putative low molecular weight protein-tyrosine-phosphatase from Klebsiella pneumoniae.